A 192-amino-acid chain; its full sequence is Imidazoleglycerol-phosphate dehydratase (192 aa).

The protein belongs to the imidazoleglycerol-phosphate dehydratase family.

It is found in the cytoplasm. It carries out the reaction D-erythro-1-(imidazol-4-yl)glycerol 3-phosphate = 3-(imidazol-4-yl)-2-oxopropyl phosphate + H2O. The protein operates within amino-acid biosynthesis; L-histidine biosynthesis; L-histidine from 5-phospho-alpha-D-ribose 1-diphosphate: step 6/9. The sequence is that of Imidazoleglycerol-phosphate dehydratase from Caldivirga maquilingensis (strain ATCC 700844 / DSM 13496 / JCM 10307 / IC-167).